Here is a 525-residue protein sequence, read N- to C-terminus: Vesicular inhibitory amino acid transporter (525 aa).

At 1 to 132 (MATLLRSKLT…WNVTNAIQGM (132 aa)) the chain is on the cytoplasmic side. Residues 133-153 (FVLGLPYAILHGGYLGLFLII) traverse the membrane as a helical segment. The Lumenal, vesicle segment spans residues 154–204 (FAAVVCCYTGKILIACLYEENEDGEVVRVRDSYVAIANACCAPRFPTLGGR). Y186 is modified (3'-nitrotyrosine). The helical transmembrane segment at 205–225 (VVNVAQIIELVMTCILYVVVS) threads the bilayer. Residues 226–265 (GNLMYNSFPGLPVSQKSWSIIATAVLLPCAFLKNLKAVSK) are Cytoplasmic-facing. Residues 266-286 (FSLLCTLAHFVINILVIAYCL) traverse the membrane as a helical segment. The Lumenal, vesicle portion of the chain corresponds to 287–305 (SRARDWAWEKVKFYIDVKK). The helical transmembrane segment at 306-326 (FPISIGIIVFSYTSQIFLPSL) threads the bilayer. The Cytoplasmic portion of the chain corresponds to 327-341 (EGNMQQPSEFHCMMN). A helical transmembrane segment spans residues 342-362 (WTHIAACVLKGLFALVAYLTW). Over 363–383 (ADETKEVITDNLPGSIRAVVN) the chain is Lumenal, vesicle. The chain crosses the membrane as a helical span at residues 384 to 404 (LFLVAKALLSYPLPFFAAVEV). Topologically, residues 405–438 (LEKSLFQEGSRAFFPACYGGDGRLKSWGLTLRCA) are cytoplasmic. The chain crosses the membrane as a helical span at residues 439–459 (LVVFTLLMAIYVPHFALLMGL). The Lumenal, vesicle portion of the chain corresponds to 460–461 (TG). The helical transmembrane segment at 462–482 (SLTGAGLCFLLPSLFHLRLLW) threads the bilayer. The Cytoplasmic portion of the chain corresponds to 483 to 489 (RKLLWHQ). Residues 490 to 510 (VFFDVAIFVIGGICSVSGFVH) traverse the membrane as a helical segment. The Lumenal, vesicle segment spans residues 511–525 (SLEGLIEAYRTNAED).

This sequence belongs to the amino acid/polyamine transporter 2 family. In terms of tissue distribution, brain and retina. Localized in horizontal cell tips at both rod and cone terminals.

It is found in the cytoplasmic vesicle membrane. It localises to the presynapse. The catalysed reaction is 4-aminobutanoate(out) + n H(+)(in) = 4-aminobutanoate(in) + n H(+)(out). It carries out the reaction glycine(out) + n H(+)(in) = glycine(in) + n H(+)(out). The enzyme catalyses beta-alanine(out) + n H(+)(in) = beta-alanine(in) + n H(+)(out). Chloride ions activate 4-aminobutanoate/H(+) transport. Its function is as follows. Antiporter that exchanges vesicular protons for cytosolic 4-aminobutanoate or to a lesser extend glycine, thus allowing their secretion from nerve terminals. The transport is equally dependent on the chemical and electrical components of the proton gradient. May also transport beta-alanine. Acidification of GABAergic synaptic vesicles is a prerequisite for 4-aminobutanoate uptake. This Mus musculus (Mouse) protein is Vesicular inhibitory amino acid transporter.